The sequence spans 176 residues: Mitochondrial inner membrane protein Mpv17 (176 aa).

The next 4 membrane-spanning stretches (helical) occupy residues 18-38 (VQVL…QQLV), 57-77 (LGCG…DHLI), 94-114 (GGFA…LNGM), and 131-151 (LITN…LVPL).

Belongs to the peroxisomal membrane protein PXMP2/4 family.

It localises to the mitochondrion inner membrane. Functionally, non-selective channel that modulates the membrane potential under normal conditions and oxidative stress, and is involved in mitochondrial homeostasis. Involved in mitochondrial deoxynucleoside triphosphates (dNTP) pool homeostasis and mitochondrial DNA (mtDNA) maintenance. May be involved in the regulation of reactive oxygen species metabolism and the control of oxidative phosphorylation. This is Mitochondrial inner membrane protein Mpv17 from Rattus norvegicus (Rat).